The primary structure comprises 449 residues: uncharacterized protein (449 aa).

Disordered stretches follow at residues 1–58 (MVKR…SLSS) and 71–125 (EALE…VVEL). Residues 30 to 46 (KQRDELREKQKRKREDS) are compositionally biased toward basic and acidic residues. A compositionally biased stretch (acidic residues) spans 103 to 124 (SDDDDDDNEEEDDNGFEDQVVE).

It belongs to the bystin family.

This is an uncharacterized protein from Caenorhabditis elegans.